The primary structure comprises 550 residues: Hydroxylamine reductase (550 aa).

The [2Fe-2S] cluster site is built by Cys3, Cys6, Cys18, and Cys25. Positions 249, 273, 317, 405, 433, 458, 492, and 494 each coordinate hybrid [4Fe-2O-2S] cluster. A Cysteine persulfide modification is found at Cys405.

The protein belongs to the HCP family. It depends on [2Fe-2S] cluster as a cofactor. Hybrid [4Fe-2O-2S] cluster is required as a cofactor.

The protein localises to the cytoplasm. It catalyses the reaction A + NH4(+) + H2O = hydroxylamine + AH2 + H(+). Its function is as follows. Catalyzes the reduction of hydroxylamine to form NH(3) and H(2)O. In Escherichia coli (strain SMS-3-5 / SECEC), this protein is Hydroxylamine reductase.